We begin with the raw amino-acid sequence, 150 residues long: Galectin-2 (150 aa).

A Galectin domain is found at 9-141; the sequence is NQVKLQNDFK…FSSPVTVDVH (133 aa). His-51, Arg-55, Asn-64, Glu-75, and Arg-77 together coordinate a carbohydrate.

As to quaternary structure, homotetramer. Oligomerization is required for carbohydrate binding.

The protein localises to the secreted. It localises to the extracellular space. The protein resides in the extracellular matrix. It is found in the cell wall. Its subcellular location is the endomembrane system. Binds lactose. May play a role in fruiting body formation. Displays toxicity towards the nematode C.elegans by binding to a specific Gal-beta-1,4-Fuc-alpha-1,6 modification of N-glycan cores on C.elegans intestinal cells. The chain is Galectin-2 (Cgl2) from Coprinopsis cinerea (Inky cap fungus).